The chain runs to 152 residues: Endoribonuclease YbeY (152 aa).

Zn(2+) contacts are provided by His-113, His-117, and His-123.

Belongs to the endoribonuclease YbeY family. Requires Zn(2+) as cofactor.

The protein resides in the cytoplasm. In terms of biological role, single strand-specific metallo-endoribonuclease involved in late-stage 70S ribosome quality control and in maturation of the 3' terminus of the 16S rRNA. The polypeptide is Endoribonuclease YbeY (Pseudoalteromonas atlantica (strain T6c / ATCC BAA-1087)).